The chain runs to 83 residues: Small ribosomal subunit protein bS16 (83 aa).

Belongs to the bacterial ribosomal protein bS16 family.

This is Small ribosomal subunit protein bS16 from Verminephrobacter eiseniae (strain EF01-2).